The sequence spans 559 residues: Small ribosomal subunit protein uS3m (559 aa).

Residues glutamate 113 to isoleucine 134 form a disordered region. Residues asparagine 120 to isoleucine 134 show a composition bias toward basic and acidic residues.

This sequence belongs to the universal ribosomal protein uS3 family.

Its subcellular location is the mitochondrion. The sequence is that of Small ribosomal subunit protein uS3m (RPS3) from Zea mays (Maize).